The sequence spans 446 residues: Na(+)-translocating NADH-quinone reductase subunit A (446 aa).

It belongs to the NqrA family. As to quaternary structure, composed of six subunits; NqrA, NqrB, NqrC, NqrD, NqrE and NqrF.

It carries out the reaction a ubiquinone + n Na(+)(in) + NADH + H(+) = a ubiquinol + n Na(+)(out) + NAD(+). Its activity is regulated as follows. This reaction is tightly coupled to the Na(+) pumping activity and specifically requires Na(+) for activity. Inhibited by korormicin and 2-N-heptyl-4-hydroxyquinoline N-oxide (HQNO). NQR complex catalyzes the reduction of ubiquinone-1 to ubiquinol by two successive reactions, coupled with the transport of Na(+) ions from the cytoplasm to the periplasm. NqrA to NqrE are probably involved in the second step, the conversion of ubisemiquinone to ubiquinol. The chain is Na(+)-translocating NADH-quinone reductase subunit A from Vibrio alginolyticus.